A 249-amino-acid chain; its full sequence is MADS-box transcription factor 18 (249 aa).

The MADS-box domain occupies M1 to S61. The K-box domain maps to Q88–N179. Residues N184–T249 form a disordered region. Over residues P210–N236 the composition is skewed to polar residues.

As to expression, widely expressed. Transcripts accumulate to higher levels in organs that retain meristematic characteristics: in the apical meristem and in the meristematic leaf primordia formed on its flank; in the developing panicle at the early stage of rachis-branch primordia differentiation; in the procambium of the rachis branches and in all floral organ primordia.

The protein resides in the nucleus. In terms of biological role, probable transcription factor. The chain is MADS-box transcription factor 18 (MADS18) from Oryza sativa subsp. indica (Rice).